We begin with the raw amino-acid sequence, 134 residues long: Profilin-4 (134 aa).

Cys-13 and Cys-118 form a disulfide bridge. The short motif at 84–100 (AVIRGKKGSGGITIKKT) is the Involved in PIP2 interaction element. Thr-114 carries the post-translational modification Phosphothreonine.

This sequence belongs to the profilin family. As to quaternary structure, occurs in many kinds of cells as a complex with monomeric actin in a 1:1 ratio. Post-translationally, phosphorylated by MAP kinases.

The protein resides in the cytoplasm. It is found in the cytoskeleton. In terms of biological role, binds to actin and affects the structure of the cytoskeleton. At high concentrations, profilin prevents the polymerization of actin, whereas it enhances it at low concentrations. The polypeptide is Profilin-4 (Olea europaea (Common olive)).